We begin with the raw amino-acid sequence, 234 residues long: Leucyl/phenylalanyl-tRNA--protein transferase (234 aa).

It belongs to the L/F-transferase family.

The protein resides in the cytoplasm. It catalyses the reaction N-terminal L-lysyl-[protein] + L-leucyl-tRNA(Leu) = N-terminal L-leucyl-L-lysyl-[protein] + tRNA(Leu) + H(+). It carries out the reaction N-terminal L-arginyl-[protein] + L-leucyl-tRNA(Leu) = N-terminal L-leucyl-L-arginyl-[protein] + tRNA(Leu) + H(+). The enzyme catalyses L-phenylalanyl-tRNA(Phe) + an N-terminal L-alpha-aminoacyl-[protein] = an N-terminal L-phenylalanyl-L-alpha-aminoacyl-[protein] + tRNA(Phe). Functionally, functions in the N-end rule pathway of protein degradation where it conjugates Leu, Phe and, less efficiently, Met from aminoacyl-tRNAs to the N-termini of proteins containing an N-terminal arginine or lysine. The sequence is that of Leucyl/phenylalanyl-tRNA--protein transferase from Salmonella arizonae (strain ATCC BAA-731 / CDC346-86 / RSK2980).